The sequence spans 165 residues: Cyanate hydratase (165 aa).

The segment at 1 to 20 (MAQNKANTVSQLQSLKNKSG) is disordered. Active-site residues include arginine 90, glutamate 93, and serine 116.

This sequence belongs to the cyanase family.

The catalysed reaction is cyanate + hydrogencarbonate + 3 H(+) = NH4(+) + 2 CO2. Functionally, catalyzes the reaction of cyanate with bicarbonate to produce ammonia and carbon dioxide. This chain is Cyanate hydratase, found in Medicago truncatula (Barrel medic).